The sequence spans 525 residues: Alcohol O-acetyltransferase 1 (525 aa).

Positions 24 to 41 (GHARRMGSVEDLYVALNR) are membrane association. Residues histidine 191 and aspartate 195 each act as charge relay system in the active site. The membrane association stretch occupies residues 508 to 525 (QESLEELCSIYKALLLGP).

This sequence belongs to the ATF1 alcohol acetyltransferase family.

It is found in the lipid droplet. Its subcellular location is the endoplasmic reticulum membrane. The enzyme catalyses an aliphatic alcohol + acetyl-CoA = an acetyl ester + CoA. It carries out the reaction a fatty acyl-CoA + H2O = a fatty acid + CoA + H(+). The catalysed reaction is 3-methylbutanol + acetyl-CoA = 3-methylbutyl acetate + CoA. Found to be inhibited by cadmium, copper, zinc and mercurium divalent cations and sulfhydryl reagents. Inhibited by the addition of unsaturated fatty acids to the culture. Major alcohol O-acetyltransferase that uses acetyl-CoA to synthesize acetate esters from various alcohols, producing ethyl acetate, isoamyl acetate, isobutyl acetate, butyl acetate, hexyl acetate, heptyl acetate and octyl acetate. The alcohol acyltransferase activity is promiscuous with regard to alcohol but relatively specific for acetyl-CoA since ATF1 does not use any other acyl-CoAs (C3, C4, C5, C6, C8, C10, C12). Acts also as an efficient thioesterase in vitro with specificity towards medium-chain-length acyl-CoAs. In natural environments, the production of aromatic volatile metabolites promotes dispersal through insect vectors. In Saccharomyces cerevisiae (strain ATCC 204508 / S288c) (Baker's yeast), this protein is Alcohol O-acetyltransferase 1.